A 303-amino-acid chain; its full sequence is MWPLAAALLLGSCCCGSAQLLLSKVKSVEFTSCNDTVVIPCKVLNVEAQSTDEMFVKWKLNKSYIFIYDGNKNSTTREQNFTSAKISVSDLLKGIASLTMDTHEAVVGNYTCEVTELSREGKTVIELKNRPVSWFSTNEKILIVIFPILAILLFWGKFGILTLKYKSSHTNKRIILLLVAGLALTLIVVVGAILFIPGEKPVKNASGLGLIVISTGILILLQYNVFMTAFGMTSFTIAILITQVLGYVLAVVGMCLCIMACEPVHGPLLISGLGIIALAELLGLVYMKFVASNQRTIQPPRNN.

A signal peptide spans 1 to 18 (MWPLAAALLLGSCCCGSA). Gln-19 is modified (pyrrolidone carboxylic acid). Residues 19–125 (QLLLSKVKSV…ELSREGKTVI (107 aa)) enclose the Ig-like V-type domain. At 19–140 (QLLLSKVKSV…PVSWFSTNEK (122 aa)) the chain is on the extracellular side. Disulfide bonds link Cys-33-Cys-261 and Cys-41-Cys-112. Residues Asn-34, Asn-61, Asn-73, and Asn-80 are each glycosylated (N-linked (GlcNAc...) asparagine). Phosphoserine occurs at positions 87 and 89. Asn-109 carries an N-linked (GlcNAc...) asparagine glycan. Residues 141–161 (ILIVIFPILAILLFWGKFGIL) form a helical membrane-spanning segment. Topologically, residues 162–173 (TLKYKSSHTNKR) are cytoplasmic. A helical membrane pass occupies residues 174 to 194 (IILLLVAGLALTLIVVVGAIL). Residues 195–206 (FIPGEKPVKNAS) lie on the Extracellular side of the membrane. Asn-204 is a glycosylation site (N-linked (GlcNAc...) asparagine). Residues 207–227 (GLGLIVISTGILILLQYNVFM) form a helical membrane-spanning segment. Residues 228–238 (TAFGMTSFTIA) lie on the Cytoplasmic side of the membrane. Residues 239–259 (ILITQVLGYVLAVVGMCLCIM) traverse the membrane as a helical segment. At 260-266 (ACEPVHG) the chain is on the extracellular side. The helical transmembrane segment at 267–287 (PLLISGLGIIALAELLGLVYM) threads the bilayer. Over 288–303 (KFVASNQRTIQPPRNN) the chain is Cytoplasmic.

Monomer. Interacts with THBS1 (via the C-terminal domain). Interacts with SIRPA. Interacts with FAS/CD95; interaction may be enhanced by functional activation. Interacts with SIRPG, UBQLN1 and UBQLN2. May interact with fibrinogen. Expressed in hippocampus.

It is found in the cell membrane. In terms of biological role, adhesive protein that mediates cell-to-cell interactions. Acts as a receptor for thrombospondin THBS1 and as modulator of integrin signaling through the activation of heterotrimeric G proteins. Involved in signal transduction, cardiovascular homeostasis, inflammation, apoptosis, angiogenesis, cellular self-renewal, and immunoregulation. Plays a role in modulating pulmonary endothelin EDN1 signaling. Modulates nitrous oxide (NO) signaling, in response to THBS1, hence playing a role as a pressor agent, supporting blood pressure. Plays an important role in memory formation and synaptic plasticity in the hippocampus. Receptor for SIRPA, binding to which prevents maturation of immature dendritic cells and inhibits cytokine production by mature dendritic cells. Interaction with SIRPG mediates cell-cell adhesion, enhances superantigen-dependent T-cell-mediated proliferation and costimulates T-cell activation. Positively modulates FAS-dependent apoptosis in T-cells, perhaps by enhancing FAS clustering. Plays a role in suppressing angiogenesis and may be involved in metabolic dysregulation during normal aging. In response to THBS1, negatively modulates wound healing. Inhibits stem cell self-renewal, in response to THBS1, probably by regulation of the stem cell transcription factors POU5F1/OCT4, SOX2, MYC/c-Myc and KLF4. May play a role in membrane transport and/or integrin dependent signal transduction. May prevent premature elimination of red blood cells. This is Leukocyte surface antigen CD47 (Cd47) from Rattus norvegicus (Rat).